The primary structure comprises 314 residues: Large ribosomal subunit protein uL10 (314 aa).

The tract at residues 281-314 (GSTQETPEEKKEEAKKEEKSPDESISEGLGALFQ) is disordered. A compositionally biased stretch (basic and acidic residues) spans 287–302 (PEEKKEEAKKEEKSPD).

It belongs to the universal ribosomal protein uL10 family. As to quaternary structure, part of the 50S ribosomal subunit. Forms part of the ribosomal stalk which helps the ribosome interact with GTP-bound translation factors. Forms a heptameric L10(L12)2(L12)2(L12)2 complex, where L10 forms an elongated spine to which the L12 dimers bind in a sequential fashion.

Forms part of the ribosomal stalk, playing a central role in the interaction of the ribosome with GTP-bound translation factors. This chain is Large ribosomal subunit protein uL10, found in Thermoplasma acidophilum (strain ATCC 25905 / DSM 1728 / JCM 9062 / NBRC 15155 / AMRC-C165).